Reading from the N-terminus, the 172-residue chain is Crossover junction endodeoxyribonuclease RuvC (172 aa).

Residues Asp-7, Glu-68, and Asp-141 contribute to the active site. The Mg(2+) site is built by Asp-7, Glu-68, and Asp-141.

This sequence belongs to the RuvC family. Homodimer which binds Holliday junction (HJ) DNA. The HJ becomes 2-fold symmetrical on binding to RuvC with unstacked arms; it has a different conformation from HJ DNA in complex with RuvA. In the full resolvosome a probable DNA-RuvA(4)-RuvB(12)-RuvC(2) complex forms which resolves the HJ. The cofactor is Mg(2+).

The protein resides in the cytoplasm. It carries out the reaction Endonucleolytic cleavage at a junction such as a reciprocal single-stranded crossover between two homologous DNA duplexes (Holliday junction).. In terms of biological role, the RuvA-RuvB-RuvC complex processes Holliday junction (HJ) DNA during genetic recombination and DNA repair. Endonuclease that resolves HJ intermediates. Cleaves cruciform DNA by making single-stranded nicks across the HJ at symmetrical positions within the homologous arms, yielding a 5'-phosphate and a 3'-hydroxyl group; requires a central core of homology in the junction. The consensus cleavage sequence is 5'-(A/T)TT(C/G)-3'. Cleavage occurs on the 3'-side of the TT dinucleotide at the point of strand exchange. HJ branch migration catalyzed by RuvA-RuvB allows RuvC to scan DNA until it finds its consensus sequence, where it cleaves and resolves the cruciform DNA. In Frankia casuarinae (strain DSM 45818 / CECT 9043 / HFP020203 / CcI3), this protein is Crossover junction endodeoxyribonuclease RuvC.